The primary structure comprises 398 residues: Digeranylgeranylglycerophospholipid reductase (398 aa).

Residues Ala-15, Glu-34, Cys-45, Ala-46, Gly-48, Arg-99, Ala-123, Asp-280, Gly-292, and Ile-293 each contribute to the FAD site. Val-372 contributes to the a 2,3-bis-O-(geranylgeranyl)-sn-glycerol 1-phospholipid binding site.

Belongs to the geranylgeranyl reductase family. DGGGPL reductase subfamily. FAD serves as cofactor.

It carries out the reaction a 2,3-bis-O-phytanyl-sn-glycerol 1-phospholipid + 8 oxidized 2[4Fe-4S]-[ferredoxin] = a 2,3-bis-O-(geranylgeranyl)-sn-glycerol 1-phospholipid + 8 reduced 2[4Fe-4S]-[ferredoxin] + 16 H(+). The enzyme catalyses 2,3-bis-O-(phytanyl)-sn-glycerol 1-phosphate + 8 oxidized 2[4Fe-4S]-[ferredoxin] = 2,3-bis-O-(geranylgeranyl)-sn-glycerol 1-phosphate + 8 reduced 2[4Fe-4S]-[ferredoxin] + 16 H(+). The catalysed reaction is a 2,3-bis-O-phytanyl-sn-glycerol 1-phospholipid + 8 A = a 2,3-bis-O-(geranylgeranyl)-sn-glycerol 1-phospholipid + 8 AH2. It catalyses the reaction CDP-2,3-bis-O-(geranylgeranyl)-sn-glycerol + 8 AH2 = CDP-2,3-bis-O-(phytanyl)-sn-glycerol + 8 A. It carries out the reaction archaetidylserine + 8 AH2 = 2,3-bis-O-phytanyl-sn-glycero-3-phospho-L-serine + 8 A. Its pathway is membrane lipid metabolism; glycerophospholipid metabolism. Its function is as follows. Is involved in the reduction of 2,3-digeranylgeranylglycerophospholipids (unsaturated archaeols) into 2,3-diphytanylglycerophospholipids (saturated archaeols) in the biosynthesis of archaeal membrane lipids. Catalyzes the formation of archaetidic acid (2,3-di-O-phytanyl-sn-glyceryl phosphate) from 2,3-di-O-geranylgeranylglyceryl phosphate (DGGGP) via the hydrogenation of each double bond of the isoprenoid chains. Is also probably able to reduce double bonds of geranyl groups in CDP-2,3-bis-O-(geranylgeranyl)-sn-glycerol and archaetidylserine, thus acting at various stages in the biosynthesis of archaeal membrane lipids. The chain is Digeranylgeranylglycerophospholipid reductase from Methanoculleus marisnigri (strain ATCC 35101 / DSM 1498 / JR1).